The chain runs to 375 residues: 23S rRNA (uracil(747)-C(5))-methyltransferase RlmC (375 aa).

Residues Cys3, Cys11, Cys14, and Cys87 each coordinate [4Fe-4S] cluster. Gln212, Phe241, Glu262, and Asn307 together coordinate S-adenosyl-L-methionine. Cys334 functions as the Nucleophile in the catalytic mechanism.

It belongs to the class I-like SAM-binding methyltransferase superfamily. RNA M5U methyltransferase family. RlmC subfamily.

The enzyme catalyses uridine(747) in 23S rRNA + S-adenosyl-L-methionine = 5-methyluridine(747) in 23S rRNA + S-adenosyl-L-homocysteine + H(+). Its function is as follows. Catalyzes the formation of 5-methyl-uridine at position 747 (m5U747) in 23S rRNA. This Escherichia coli O139:H28 (strain E24377A / ETEC) protein is 23S rRNA (uracil(747)-C(5))-methyltransferase RlmC.